The following is a 300-amino-acid chain: Ribosomal protein L11 methyltransferase (300 aa).

Residues threonine 147, glycine 168, aspartate 190, and asparagine 236 each coordinate S-adenosyl-L-methionine.

Belongs to the methyltransferase superfamily. PrmA family.

It is found in the cytoplasm. It carries out the reaction L-lysyl-[protein] + 3 S-adenosyl-L-methionine = N(6),N(6),N(6)-trimethyl-L-lysyl-[protein] + 3 S-adenosyl-L-homocysteine + 3 H(+). Methylates ribosomal protein L11. The polypeptide is Ribosomal protein L11 methyltransferase (Leptospira interrogans serogroup Icterohaemorrhagiae serovar Lai (strain 56601)).